We begin with the raw amino-acid sequence, 173 residues long: Crossover junction endodeoxyribonuclease RuvC (173 aa).

Residues Asp8, Glu67, and Asp139 contribute to the active site. The Mg(2+) site is built by Asp8, Glu67, and Asp139.

This sequence belongs to the RuvC family. Homodimer which binds Holliday junction (HJ) DNA. The HJ becomes 2-fold symmetrical on binding to RuvC with unstacked arms; it has a different conformation from HJ DNA in complex with RuvA. In the full resolvosome a probable DNA-RuvA(4)-RuvB(12)-RuvC(2) complex forms which resolves the HJ. Requires Mg(2+) as cofactor.

Its subcellular location is the cytoplasm. It catalyses the reaction Endonucleolytic cleavage at a junction such as a reciprocal single-stranded crossover between two homologous DNA duplexes (Holliday junction).. Functionally, the RuvA-RuvB-RuvC complex processes Holliday junction (HJ) DNA during genetic recombination and DNA repair. Endonuclease that resolves HJ intermediates. Cleaves cruciform DNA by making single-stranded nicks across the HJ at symmetrical positions within the homologous arms, yielding a 5'-phosphate and a 3'-hydroxyl group; requires a central core of homology in the junction. The consensus cleavage sequence is 5'-(A/T)TT(C/G)-3'. Cleavage occurs on the 3'-side of the TT dinucleotide at the point of strand exchange. HJ branch migration catalyzed by RuvA-RuvB allows RuvC to scan DNA until it finds its consensus sequence, where it cleaves and resolves the cruciform DNA. This Photobacterium profundum (strain SS9) protein is Crossover junction endodeoxyribonuclease RuvC.